The following is a 1083-amino-acid chain: Ubiquitin carboxyl-terminal hydrolase 1 (1083 aa).

The UBP-type zinc-finger motif lies at 30 to 165; it reads RSCVHFDKYV…KKDLLLEVVK (136 aa). Positions 32, 34, 56, 59, 95, 98, 103, 115, 119, 125, 139, and 142 each coordinate Zn(2+). The USP domain maps to 202-1083; sequence RGLVNLGNTC…EAYILFYERI (882 aa). Cysteine 211 (nucleophile) is an active-site residue. Disordered stretches follow at residues 387-424 and 450-486; these read KDSE…DNET and GSTE…ASGI. 2 stretches are compositionally biased toward basic and acidic residues: residues 409–419 and 455–473; these read SDHKIQSRPET and LMHD…EDVR. Polar residues predominate over residues 474-485; it reads ATQSNEETSASG. The Proton acceptor role is filled by histidine 1029.

The protein belongs to the peptidase C19 family.

The catalysed reaction is Thiol-dependent hydrolysis of ester, thioester, amide, peptide and isopeptide bonds formed by the C-terminal Gly of ubiquitin (a 76-residue protein attached to proteins as an intracellular targeting signal).. In terms of biological role, recognizes and hydrolyzes the peptide bond at the C-terminal Gly of ubiquitin. Involved in the processing of poly-ubiquitin precursors as well as that of ubiquitinated proteins. Is involved in resistance to the arginine analog canavanine (CAN). The sequence is that of Ubiquitin carboxyl-terminal hydrolase 1 (UBP1) from Arabidopsis thaliana (Mouse-ear cress).